The following is a 297-amino-acid chain: MAFQKDAKSSAYSSRFQTPFRRRREGKTDYYQRKRLVTQHKAKYNTPKYRLVVRFTNKDIICQIISSTITGDVVLAAAYSHELPRYGITHGLTNWAAAYATGLLIARRTLQKLGLDETYKGVEEVEGEYELTEAVEDGPRPFKVFLDIGLQRTTTGARVFGALKGASDGGLYVPHSENRFPGWDFETEEIDPELLRSYIFGGHVSQYMEELADDDEERFSELFKGYLADDIDADSLEDIYTSAHEAIRADPAFKPTEKKFTKEQYAAESKKYRQTKLSKEERAARVAAKIAALAGQQ.

Residue K164 forms a Glycyl lysine isopeptide (Lys-Gly) (interchain with G-Cter in ubiquitin) linkage. Residues S167, S176, and S235 each carry the phosphoserine modification.

It belongs to the universal ribosomal protein uL18 family. In terms of assembly, component of the large ribosomal subunit (LSU). Mature yeast ribosomes consist of a small (40S) and a large (60S) subunit. The 40S small subunit contains 1 molecule of ribosomal RNA (18S rRNA) and 33 different proteins (encoded by 57 genes). The large 60S subunit contains 3 rRNA molecules (25S, 5.8S and 5S rRNA) and 46 different proteins (encoded by 81 genes). Component of a hexameric 5S RNP precursor complex, composed of 5S RNA, RRS1, RPF2, RPL5, RPL11A/RPL11B and SYO1; this complex acts as a precursor for ribosome assembly. RPL5/uL18 forms a heterotrimeric complex with SYO1 and RPL11A/RPL11B/uL5. Interaction of this complex with KAP104 allows the nuclear import of the heterotrimer.

The protein resides in the cytoplasm. The protein localises to the nucleus. Component of the ribosome, a large ribonucleoprotein complex responsible for the synthesis of proteins in the cell. The small ribosomal subunit (SSU) binds messenger RNAs (mRNAs) and translates the encoded message by selecting cognate aminoacyl-transfer RNA (tRNA) molecules. The large subunit (LSU) contains the ribosomal catalytic site termed the peptidyl transferase center (PTC), which catalyzes the formation of peptide bonds, thereby polymerizing the amino acids delivered by tRNAs into a polypeptide chain. The nascent polypeptides leave the ribosome through a tunnel in the LSU and interact with protein factors that function in enzymatic processing, targeting, and the membrane insertion of nascent chains at the exit of the ribosomal tunnel. In Saccharomyces cerevisiae (strain ATCC 204508 / S288c) (Baker's yeast), this protein is Large ribosomal subunit protein uL18.